Reading from the N-terminus, the 53-residue chain is Antilisterial bacteriocin subtilosin biosynthesis protein AlbB (53 aa).

2 consecutive transmembrane segments (helical) span residues 8–28 (ILLY…FVKS) and 30–50 (YLFT…ARKA).

Its subcellular location is the cell membrane. Functionally, involved in the production of the bacteriocin subtilosin. Required for maximal production and for optimal immunity to subtilosin. The chain is Antilisterial bacteriocin subtilosin biosynthesis protein AlbB (albB) from Bacillus subtilis (strain 168).